Consider the following 398-residue polypeptide: Fe-regulated protein 8 (398 aa).

Protein of unknown function; part of the gene cluster that mediates the biosynthesis of siderophore ferrichrome A which is contributing to organismal virulence. In Mycosarcoma maydis (Corn smut fungus), this protein is Fe-regulated protein 8.